Consider the following 301-residue polypeptide: Sulfate adenylyltransferase subunit 2 (301 aa).

Positions 279-301 (RQGRMIDHDSSGSMEEKKKQGYF) are disordered.

It belongs to the PAPS reductase family. CysD subfamily. In terms of assembly, heterodimer composed of CysD, the smaller subunit, and CysN.

It carries out the reaction sulfate + ATP + H(+) = adenosine 5'-phosphosulfate + diphosphate. The protein operates within sulfur metabolism; hydrogen sulfide biosynthesis; sulfite from sulfate: step 1/3. With CysN forms the ATP sulfurylase (ATPS) that catalyzes the adenylation of sulfate producing adenosine 5'-phosphosulfate (APS) and diphosphate, the first enzymatic step in sulfur assimilation pathway. APS synthesis involves the formation of a high-energy phosphoric-sulfuric acid anhydride bond driven by GTP hydrolysis by CysN coupled to ATP hydrolysis by CysD. This chain is Sulfate adenylyltransferase subunit 2, found in Marinomonas sp. (strain MWYL1).